The following is a 664-amino-acid chain: Translation factor guf1, mitochondrial (664 aa).

The transit peptide at 1–43 (MRGCLQLARWLSAGPKCPAASLPKAPSGLYNTIRSFTSSAQLA) directs the protein to the mitochondrion. The tr-type G domain maps to 66 to 246 (DRYRNFCIVA…TVVEKIPAPV (181 aa)). Residues 75–82 (AHVDHGKS), 139–143 (DTPGH), and 193–196 (NKVD) each bind GTP.

The protein belongs to the TRAFAC class translation factor GTPase superfamily. Classic translation factor GTPase family. LepA subfamily.

The protein localises to the mitochondrion inner membrane. It catalyses the reaction GTP + H2O = GDP + phosphate + H(+). Its function is as follows. Promotes mitochondrial protein synthesis. May act as a fidelity factor of the translation reaction, by catalyzing a one-codon backward translocation of tRNAs on improperly translocated ribosomes. Binds to mitochondrial ribosomes in a GTP-dependent manner. The protein is Translation factor guf1, mitochondrial (guf1) of Aspergillus oryzae (strain ATCC 42149 / RIB 40) (Yellow koji mold).